We begin with the raw amino-acid sequence, 416 residues long: Phosphoglycerate kinase (416 aa).

Valine 22, aspartate 23, phenylalanine 24, asparagine 25, glutamine 37, arginine 38, serine 61, histidine 62, glycine 64, arginine 65, leucine 120, arginine 121, histidine 168, and arginine 169 together coordinate (2R)-3-phosphoglycerate. Glycine 212 provides a ligand contact to ADP. Glycine 212 provides a ligand contact to CDP. AMP-binding residues include alanine 213 and lysine 214. Residue alanine 213 participates in ATP binding. Alanine 213 serves as a coordination point for Mg(2+). CDP is bound at residue aspartate 217. A Mg(2+)-binding site is contributed by aspartate 217. Lysine 218 is a binding site for AMP. Residue lysine 218 coordinates ATP. Glycine 236 is an ADP binding site. Glycine 236 provides a ligand contact to CDP. The AMP site is built by glycine 237 and glycine 311. ATP contacts are provided by glycine 237 and glycine 311. Residues glycine 336 and phenylalanine 341 each contribute to the CDP site. An ADP-binding site is contributed by phenylalanine 341. Residue glutamate 342 coordinates AMP. Residues glutamate 342, aspartate 373, and threonine 374 each contribute to the ATP site. Aspartate 373 contacts Mg(2+).

The protein belongs to the phosphoglycerate kinase family. Monomer. Requires Mg(2+) as cofactor. In terms of tissue distribution, expressed in all cells of the worm (at protein level), higher expression in the cells associated with the tubercles (tegumental modifications), the muscle and along the tegument.

It carries out the reaction (2R)-3-phosphoglycerate + ATP = (2R)-3-phospho-glyceroyl phosphate + ADP. The protein operates within carbohydrate degradation; glycolysis; pyruvate from D-glyceraldehyde 3-phosphate: step 2/5. Involved in the seventh step in glycolysis. Catalyzes the conversion of 1,3-bisphosphoglycerate ((2R)-3-phospho-glyceroyl phosphate) to 3-phosphoglycerate ((2R)-3-phosphoglycerate) and results in the formation of ATP. Associated with the tegument to provide the energy needed for the tegumental repair resulting from immune damage. This Schistosoma mansoni (Blood fluke) protein is Phosphoglycerate kinase (PGK).